A 428-amino-acid chain; its full sequence is Histone deacetylase 3 (428 aa).

The tract at residues 3–316 is histone deacetylase; that stretch reads KTVAYFYDPD…WTYETSLLVE (314 aa). 1D-myo-inositol 1,4,5,6-tetrakisphosphate-binding residues include His-17, Gly-21, and Lys-25. Residue His-135 is part of the active site. Residues Asp-170, His-172, and Asp-259 each coordinate Zn(2+). Residue Arg-265 participates in 1D-myo-inositol 1,4,5,6-tetrakisphosphate binding. Basic and acidic residues-rich tracts occupy residues 388–405 and 415–428; these read DRTD…ENYS and DGDH…DVEI. Residues 388–428 form a disordered region; that stretch reads DRTDEADAEERGPEENYSRPEAPNEFYDGDHDNDKESDVEI. A Phosphoserine modification is found at Ser-424.

Belongs to the histone deacetylase family. HD type 1 subfamily. As to quaternary structure, interacts with HDAC7 and HDAC9. Interacts with DAXX, KDM4A, HDAC10 and DACH1. Found in a complex with NCOR1 and NCOR2. Component of the N-Cor repressor complex, at least composed of NCOR1, NCOR2, HDAC3, TBL1X, TBL1R, CORO2A and GPS2. Interacts with BCOR, MJD2A/JHDM3A, NRIP1, PRDM6 and SRY. Interacts with BTBD14B. Interacts with GLIS2. Interacts (via the DNA-binding domain) with NR2C1; the interaction recruits phosphorylated NR2C1 to PML bodies for sumoylation. Component of the Notch corepressor complex. Interacts with CBFA2T3 and NKAP. Interacts with APEX1; the interaction is not dependent on the acetylated status of APEX1. Interacts with ZMYND15. Interacts with SMRT/NCOR2 and BCL6 on DNA enhancer elements. Interacts with INSM1. Interacts with XBP1 isoform 1; the interaction occurs in endothelial cell (EC) under disturbed flow. Interacts (via C-terminus) with CCAR2 (via N-terminus). Interacts with and deacetylates MEF2D. Interacts with BEND3. Interacts with NKAPL. Interacts with DHX36; this interaction occurs in a RNA-dependent manner. Interacts weakly with CRY1; this interaction is enhanced in the presence of FBXL3. Interacts with FBXL3 and BMAL1. Interacts with NCOR1. Interacts with RARA. Interacts with SETD5. (Microbial infection) Interacts with human cytomegalovirus (HHV-5) immediate early protein IE1; this interaction decreases histone acetylation and allows transcriptional activation by the virus. Zn(2+) is required as a cofactor. Sumoylated in vitro. Post-translationally, deubiquitinated on 'Lys-63'-linked ubiquitin chains by USP38; leading to a decreased level of histone acetylation. As to expression, widely expressed.

The protein resides in the nucleus. The protein localises to the chromosome. Its subcellular location is the cytoplasm. It localises to the cytosol. It carries out the reaction N(6)-acetyl-L-lysyl-[histone] + H2O = L-lysyl-[histone] + acetate. It catalyses the reaction N(6)-acetyl-L-lysyl-[protein] + H2O = L-lysyl-[protein] + acetate. The catalysed reaction is N(6)-(2E)-butenoyl-L-lysyl-[protein] + H2O = (2E)-2-butenoate + L-lysyl-[protein]. The enzyme catalyses N(6)-(2-hydroxyisobutanoyl)-L-lysyl-[protein] + H2O = 2-hydroxy-2-methylpropanoate + L-lysyl-[protein]. It carries out the reaction N(6)-[(S)-lactoyl]-L-lysyl-[protein] + H2O = (S)-lactate + L-lysyl-[protein]. With respect to regulation, inositol tetraphosphate (1D-myo-inositol 1,4,5,6-tetrakisphosphate) promotes the histone deacetylase activity by acting as an intermolecular glue between HDAC3 and NCOR2, thereby promoting its association with the N-Cor complex, a prerequisite for the histone deacetylase activity. Functionally, histone deacetylase that catalyzes the deacetylation of lysine residues on the N-terminal part of the core histones (H2A, H2B, H3 and H4), and some other non-histone substrates. Histone deacetylation gives a tag for epigenetic repression and plays an important role in transcriptional regulation, cell cycle progression and developmental events. Histone deacetylases act via the formation of large multiprotein complexes, such as N-Cor repressor complex, which activate the histone deacetylase activity. Participates in the BCL6 transcriptional repressor activity by deacetylating the H3 'Lys-27' (H3K27) on enhancer elements, antagonizing EP300 acetyltransferase activity and repressing proximal gene expression. Acts as a molecular chaperone for shuttling phosphorylated NR2C1 to PML bodies for sumoylation. Contributes, together with XBP1 isoform 1, to the activation of NFE2L2-mediated HMOX1 transcription factor gene expression in a PI(3)K/mTORC2/Akt-dependent signaling pathway leading to endothelial cell (EC) survival under disturbed flow/oxidative stress. Regulates both the transcriptional activation and repression phases of the circadian clock in a deacetylase activity-independent manner. During the activation phase, promotes the accumulation of ubiquitinated BMAL1 at the E-boxes and during the repression phase, blocks FBXL3-mediated CRY1/2 ubiquitination and promotes the interaction of CRY1 and BMAL1. The NCOR1-HDAC3 complex regulates the circadian expression of the core clock gene BMAL1 and the genes involved in lipid metabolism in the liver. Also functions as a deacetylase for non-histone targets, such as KAT5, MEF2D, MAPK14, RARA and STAT3. Serves as a corepressor of RARA, mediating its deacetylation and repression, leading to inhibition of RARE DNA element binding. In association with RARA, plays a role in the repression of microRNA-10a and thereby in the inflammatory response. In addition to protein deacetylase activity, also acts as a protein-lysine deacylase by recognizing other acyl groups: catalyzes removal of (2E)-butenoyl (crotonyl), lactoyl (lactyl) and 2-hydroxyisobutanoyl (2-hydroxyisobutyryl) acyl groups from lysine residues, leading to protein decrotonylation, delactylation and de-2-hydroxyisobutyrylation, respectively. Catalyzes decrotonylation of MAPRE1/EB1. Mediates delactylation NBN/NBS1, thereby inhibiting DNA double-strand breaks (DSBs) via homologous recombination (HR). The polypeptide is Histone deacetylase 3 (HDAC3) (Homo sapiens (Human)).